The following is a 225-amino-acid chain: Cytidylate kinase (225 aa).

ATP is bound at residue 11–19; sequence GPAAAGKST.

Belongs to the cytidylate kinase family. Type 1 subfamily.

It localises to the cytoplasm. It carries out the reaction CMP + ATP = CDP + ADP. It catalyses the reaction dCMP + ATP = dCDP + ADP. The sequence is that of Cytidylate kinase from Bacillus cereus (strain G9842).